Consider the following 640-residue polypeptide: Threonine--tRNA ligase (640 aa).

The TGS domain maps to 1 to 61; sequence MVKITYPDNS…MQDSTIKLIT (61 aa). Residues 242 to 533 are catalytic; that stretch reads DHRKLGPKLN…LIENFAGEFP (292 aa). Residues Cys-334, His-385, and His-510 each coordinate Zn(2+).

This sequence belongs to the class-II aminoacyl-tRNA synthetase family. As to quaternary structure, homodimer. Zn(2+) serves as cofactor.

It localises to the cytoplasm. It catalyses the reaction tRNA(Thr) + L-threonine + ATP = L-threonyl-tRNA(Thr) + AMP + diphosphate + H(+). Functionally, catalyzes the attachment of threonine to tRNA(Thr) in a two-step reaction: L-threonine is first activated by ATP to form Thr-AMP and then transferred to the acceptor end of tRNA(Thr). Also edits incorrectly charged L-seryl-tRNA(Thr). This Petrotoga mobilis (strain DSM 10674 / SJ95) protein is Threonine--tRNA ligase.